Reading from the N-terminus, the 211-residue chain is Riboflavin kinase (211 aa).

Residues 1 to 85 form an H-T-H motif-like region; the sequence is MKKILMLIEL…CDKISNALSK (85 aa). Residues 86-211 form a riboflavin kinase region; the sequence is GVIVGEVVSG…GDRVRLEVIQ (126 aa). 95-100 contributes to the CDP binding site; sequence GLGEGA. Thr-122 and Asn-124 together coordinate Mg(2+). FMN-binding residues include Thr-178 and Glu-186. Position 191-194 (191-194) interacts with CDP; it reads VNLR.

It belongs to the archaeal riboflavin kinase family. It depends on Mg(2+) as a cofactor.

The catalysed reaction is riboflavin + CTP = CDP + FMN + H(+). Its pathway is cofactor biosynthesis; FMN biosynthesis; FMN from riboflavin (CTP route): step 1/1. Functionally, catalyzes the CTP-dependent phosphorylation of riboflavin (vitamin B2) to form flavin mononucleotide (FMN). The protein is Riboflavin kinase (ribK) of Thermococcus kodakarensis (strain ATCC BAA-918 / JCM 12380 / KOD1) (Pyrococcus kodakaraensis (strain KOD1)).